A 75-amino-acid polypeptide reads, in one-letter code: UPF0270 protein PFLU_4323 (75 aa).

The protein belongs to the UPF0270 family.

This Pseudomonas fluorescens (strain SBW25) protein is UPF0270 protein PFLU_4323.